The primary structure comprises 207 residues: Ribosomal RNA small subunit methyltransferase G (207 aa).

Residues G73, L78, 124 to 125 (VE), and R139 each bind S-adenosyl-L-methionine.

The protein belongs to the methyltransferase superfamily. RNA methyltransferase RsmG family.

The protein localises to the cytoplasm. The catalysed reaction is guanosine(527) in 16S rRNA + S-adenosyl-L-methionine = N(7)-methylguanosine(527) in 16S rRNA + S-adenosyl-L-homocysteine. Its function is as follows. Specifically methylates the N7 position of guanine in position 527 of 16S rRNA. The sequence is that of Ribosomal RNA small subunit methyltransferase G from Klebsiella pneumoniae (strain 342).